The following is a 319-amino-acid chain: Ankyrin repeat domain-containing protein 1 (319 aa).

Residues 63–89 (EKEREAELKKKKLEQRSKLENLEDLEI) adopt a coiled-coil conformation. ANK repeat units lie at residues 152–181 (YKRTALHRACLEGHLAIVEKLIEAGAQIEF), 185–214 (LESTAIHWASRGGNLDVLKLLLNKGAKISA), 218–247 (LLSTALHVAVRTGHYECAEHLIACEADLNA), 251–280 (EGDTPLHDAVRLNRYKMIRLLITYGADLNV), and 284–315 (AGKTPMDLVLNWQNGTKAIFDSLKENSYKASR).

In terms of assembly, interacts with TTN/titin and YBX1. Expressed in heart. In postnatal neonatal heart, it is expressed in an asymmetrical way; left ventricle favored towards right ventricle. Whether or not this could be correlated with a hypertrophic heart is still a matter of debate. Levels increase gradually from newborn to adult.

Its subcellular location is the nucleus. In terms of biological role, may play an important role in endothelial cell activation. May act as a nuclear transcription factor that negatively regulates the expression of cardiac genes. The sequence is that of Ankyrin repeat domain-containing protein 1 (ANKRD1) from Sus scrofa (Pig).